We begin with the raw amino-acid sequence, 387 residues long: NAD(P)H oxidoreductase RTN4IP1, mitochondrial (387 aa).

The transit peptide at 1–27 (MLMCRRWLVCSLRCHYRSFSFSAARRT) directs the protein to the mitochondrion. Residues 38-379 (GKNDVLRFTK…QGHARGKTVV (342 aa)) form the Enoyl reductase (ER) domain. NADPH is bound by residues serine 200, glycine 202, valine 203, serine 223, tyrosine 241, leucine 286, glycine 327, phenylalanine 329, histidine 372, alanine 373, and arginine 374.

The protein belongs to the zinc-containing alcohol dehydrogenase family. Quinone oxidoreductase subfamily.

Its subcellular location is the mitochondrion matrix. The protein localises to the mitochondrion outer membrane. The enzyme catalyses a 3-demethylubiquinone + NADH + 2 H(+) = a 3-demethylubiquinol + NAD(+). The catalysed reaction is a 3-demethylubiquinone + NADPH + 2 H(+) = a 3-demethylubiquinol + NADP(+). It carries out the reaction 3-demethylubiquinone-10 + NADH + 2 H(+) = 3-demethylubiquinol-10 + NAD(+). It catalyses the reaction 3-demethylubiquinone-10 + NADPH + 2 H(+) = 3-demethylubiquinol-10 + NADP(+). Its pathway is cofactor biosynthesis; ubiquinone biosynthesis. In terms of biological role, NAD(P)H oxidoreductase involved in the ubiquinone biosynthetic pathway. Required for the O-methyltransferase activity of COQ3. Able to catalyze the oxidoreduction of 3-demethylubiquinone into 3-demethylubiquinol in vitro. However, it is unclear if 3-demethylubiquinone constitutes a substrate in vivo. May also play a role in the regulation of retinal ganglion cell (RGC) neurite outgrowth, and hence in the development of the inner retina and optic nerve. The chain is NAD(P)H oxidoreductase RTN4IP1, mitochondrial (rtn4ip1) from Danio rerio (Zebrafish).